A 240-amino-acid polypeptide reads, in one-letter code: Probable transcriptional regulatory protein PBPRB1582 (240 aa).

This sequence belongs to the TACO1 family.

It is found in the cytoplasm. The polypeptide is Probable transcriptional regulatory protein PBPRB1582 (Photobacterium profundum (strain SS9)).